Consider the following 414-residue polypeptide: 2,3-diketo-5-methylthiopentyl-1-phosphate enolase (414 aa).

The active-site Proton acceptor is the Lys99. Residues Lys148, 174-177 (KDDE), His265, Gly338, and 360-361 (GG) contribute to the substrate site. Residues Lys174, Asp176, and Glu177 each contribute to the Mg(2+) site. At Lys174 the chain carries N6-carboxylysine.

The protein belongs to the RuBisCO large chain family. Type IV subfamily. Homodimer. Mg(2+) serves as cofactor.

The catalysed reaction is 5-methylsulfanyl-2,3-dioxopentyl phosphate = 2-hydroxy-5-methylsulfanyl-3-oxopent-1-enyl phosphate. Its pathway is amino-acid biosynthesis; L-methionine biosynthesis via salvage pathway; L-methionine from S-methyl-5-thio-alpha-D-ribose 1-phosphate: step 3/6. In terms of biological role, catalyzes the enolization of 2,3-diketo-5-methylthiopentyl-1-phosphate (DK-MTP-1-P) into 2-hydroxy-3-keto-5-methylthiopentenyl-1-phosphate (HK-MTPenyl-1-P). The protein is 2,3-diketo-5-methylthiopentyl-1-phosphate enolase of Bacillus cereus (strain ATCC 14579 / DSM 31 / CCUG 7414 / JCM 2152 / NBRC 15305 / NCIMB 9373 / NCTC 2599 / NRRL B-3711).